A 76-amino-acid polypeptide reads, in one-letter code: Conotoxin TsMLCL-03 (76 aa).

The signal sequence occupies residues 1–19 (MLCLPVFIILLLLASPAAP). A propeptide spanning residues 20 to 44 (NPLERRIQSDLIRTALEDADMKTPK) is cleaved from the precursor.

The protein belongs to the conotoxin T superfamily. In terms of processing, contains 2 disulfide bonds that can be either 'C1-C3, C2-C4' or 'C1-C4, C2-C3', since these disulfide connectivities have been observed for conotoxins with cysteine framework V (for examples, see AC P0DQQ7 and AC P81755). As to expression, expressed by the venom duct.

The protein resides in the secreted. In Conus tessulatus (Tessellate cone), this protein is Conotoxin TsMLCL-03.